A 259-amino-acid chain; its full sequence is Flagellar brake protein YcgR (259 aa).

The PilZ domain occupies 129 to 246; that stretch reads QRREFYRLQT…DNAIQRYIFK (118 aa).

Belongs to the YcgR family. Monomer. Interacts with the flagellar basal bodies.

Its subcellular location is the bacterial flagellum basal body. Acts as a flagellar brake, regulating swimming and swarming in a bis-(3'-5') cyclic diguanylic acid (c-di-GMP)-dependent manner. Binds 1 c-di-GMP dimer per subunit. Increasing levels of c-di-GMP lead to decreased motility. The polypeptide is Flagellar brake protein YcgR (Azoarcus sp. (strain BH72)).